Consider the following 576-residue polypeptide: Peptidoglycan D,D-transpeptidase FtsI (576 aa).

Residues 22–42 traverse the membrane as a helical segment; that stretch reads ITILLSLIIITIILVLSRITF. Ser308 (acyl-ester intermediate) is an active-site residue.

Belongs to the transpeptidase family. FtsI subfamily.

It localises to the cell inner membrane. It carries out the reaction Preferential cleavage: (Ac)2-L-Lys-D-Ala-|-D-Ala. Also transpeptidation of peptidyl-alanyl moieties that are N-acyl substituents of D-alanine.. It functions in the pathway cell wall biogenesis; peptidoglycan biosynthesis. Its function is as follows. Catalyzes cross-linking of the peptidoglycan cell wall at the division septum. This is Peptidoglycan D,D-transpeptidase FtsI from Buchnera aphidicola subsp. Baizongia pistaciae (strain Bp).